A 262-amino-acid polypeptide reads, in one-letter code: Phosphonates import ATP-binding protein PhnC (262 aa).

One can recognise an ABC transporter domain in the interval 5-253 (IRVEKLAKTF…RFDHLYRSIN (249 aa)). 37-44 (GPSGSGKS) serves as a coordination point for ATP.

The protein belongs to the ABC transporter superfamily. Phosphonates importer (TC 3.A.1.9.1) family. The complex is composed of two ATP-binding proteins (PhnC), two transmembrane proteins (PhnE) and a solute-binding protein (PhnD).

Its subcellular location is the cell inner membrane. The enzyme catalyses phosphonate(out) + ATP + H2O = phosphonate(in) + ADP + phosphate + H(+). Functionally, part of the ABC transporter complex PhnCDE involved in phosphonates import. Responsible for energy coupling to the transport system. The protein is Phosphonates import ATP-binding protein PhnC of Shigella dysenteriae serotype 1 (strain Sd197).